A 341-amino-acid polypeptide reads, in one-letter code: Anthranilate phosphoribosyltransferase (341 aa).

Residues G81, 84–85 (GD), S89, 91–94 (NIST), 109–117 (KHGNRSASS), and S121 contribute to the 5-phospho-alpha-D-ribose 1-diphosphate site. G81 is an anthranilate binding site. A Mg(2+)-binding site is contributed by S93. N112 contacts anthranilate. Position 167 (R167) interacts with anthranilate. Residues D225 and E226 each contribute to the Mg(2+) site.

This sequence belongs to the anthranilate phosphoribosyltransferase family. Homodimer. Requires Mg(2+) as cofactor.

It carries out the reaction N-(5-phospho-beta-D-ribosyl)anthranilate + diphosphate = 5-phospho-alpha-D-ribose 1-diphosphate + anthranilate. Its pathway is amino-acid biosynthesis; L-tryptophan biosynthesis; L-tryptophan from chorismate: step 2/5. Its function is as follows. Catalyzes the transfer of the phosphoribosyl group of 5-phosphorylribose-1-pyrophosphate (PRPP) to anthranilate to yield N-(5'-phosphoribosyl)-anthranilate (PRA). This is Anthranilate phosphoribosyltransferase from Nocardioides sp. (strain ATCC BAA-499 / JS614).